The sequence spans 1320 residues: FERM and PDZ domain-containing protein 4 (1320 aa).

The WW domain occupies 33–66 (QVPPYGWEMMTNRDGRDYFINHMTQAIPFDDPRF). In terms of domain architecture, PDZ spans 78 to 155 (KVEMRRDPVL…SILLTVIQPY (78 aa)). The region spanning 204-519 (NVLKVYLENG…GYYRLLVDSR (316 aa)) is the FERM domain. 6 disordered regions span residues 809–847 (APPP…EIPV), 897–927 (YSPE…QKQS), 949–981 (TEFP…PPKV), 1024–1050 (KRKS…QQGT), 1114–1139 (PRGP…ADDA), and 1204–1274 (GHFS…ATFE). Residues 900–913 (ESSSDSGNETNSSE) show a composition bias toward low complexity. A compositionally biased stretch (polar residues) spans 1204–1217 (GHFSLQSSQGSSVD). The span at 1223–1232 (GSSSSACATP) shows a compositional bias: low complexity.

In terms of assembly, interacts (via C-terminus) with DLG1, DLG2, DLG3 and DLG4/PSD95. Interacts (via N-terminus) with ARHGEF7; the interaction is mediated by the PDZ domain. Interacts with GPSM2 (via TPR repeat region). In terms of tissue distribution, expressed in various regions of the brain, including cortex, hippocampus, cerebellum, olfactory bulb and medial habenular nucleus.

The protein localises to the cell projection. It localises to the dendritic spine. Its function is as follows. Positive regulator of dendritic spine morphogenesis and density. Required for the maintenance of excitatory synaptic transmission. Binds phosphatidylinositol 4,5-bisphosphate. This Mus musculus (Mouse) protein is FERM and PDZ domain-containing protein 4 (Frmpd4).